A 113-amino-acid chain; its full sequence is UPF0482 protein CKO_01577 (113 aa).

The N-terminal stretch at 1–28 (MNNTLSKRLCLTAMLALGAVVYTTSAFA) is a signal peptide. The segment at 44–67 (RQHAAMEKEQWNDTRSLRQKVNTR) is disordered. Basic and acidic residues predominate over residues 47–59 (AAMEKEQWNDTRS).

The protein belongs to the UPF0482 family.

The protein is UPF0482 protein CKO_01577 of Citrobacter koseri (strain ATCC BAA-895 / CDC 4225-83 / SGSC4696).